The sequence spans 244 residues: Small ribosomal subunit protein eS4 (244 aa).

Positions 43–106 constitute an S4 RNA-binding domain; that stretch reads LPLLLIVRDT…NENYLVLFDE (64 aa).

Belongs to the eukaryotic ribosomal protein eS4 family.

The chain is Small ribosomal subunit protein eS4 (rps4e) from Methanococcus vannielii.